We begin with the raw amino-acid sequence, 150 residues long: Large ribosomal subunit protein bL9 (150 aa).

Belongs to the bacterial ribosomal protein bL9 family.

Its function is as follows. Binds to the 23S rRNA. The sequence is that of Large ribosomal subunit protein bL9 from Lactococcus lactis subsp. cremoris (strain SK11).